Reading from the N-terminus, the 194-residue chain is MPVARSWVCRKTYVTPRRPFEKSRLDQELKLIGEYGLRNKREVWRVKFTLAKIRKAARELLTLDEKDPRRLFEGNALLRRLVRIGVLDEGKMKLDYILGLKIEDFLERRLQTQVFKLGLAKSIHHARVLIRQRHIRVRKQVVNIPSFIVRLDSQKHIDFSLRSPYGGGRPGRVKRKNAKKGQGGAGAGDDEEED.

At lysine 66 the chain carries N6-acetyllysine. Residue lysine 93 forms a Glycyl lysine isopeptide (Lys-Gly) (interchain with G-Cter in SUMO2) linkage. The 75-residue stretch at 108-182 (RRLQTQVFKL…VKRKNAKKGQ (75 aa)) folds into the S4 RNA-binding domain. Lysine 116 is modified (N6-acetyllysine). Lysine 139 participates in a covalent cross-link: Glycyl lysine isopeptide (Lys-Gly) (interchain with G-Cter in SUMO2). Position 153 is a phosphoserine (serine 153). At lysine 155 the chain carries N6-acetyllysine. The segment at 162-194 (RSPYGGGRPGRVKRKNAKKGQGGAGAGDDEEED) is disordered. Serine 163 carries the post-translational modification Phosphoserine.

The protein belongs to the universal ribosomal protein uS4 family. Component of the small ribosomal subunit. Part of the small subunit (SSU) processome, composed of more than 70 proteins and the RNA chaperone small nucleolar RNA (snoRNA) U3.

It localises to the cytoplasm. The protein resides in the nucleus. It is found in the nucleolus. Functionally, component of the small ribosomal subunit. The ribosome is a large ribonucleoprotein complex responsible for the synthesis of proteins in the cell. Part of the small subunit (SSU) processome, first precursor of the small eukaryotic ribosomal subunit. During the assembly of the SSU processome in the nucleolus, many ribosome biogenesis factors, an RNA chaperone and ribosomal proteins associate with the nascent pre-rRNA and work in concert to generate RNA folding, modifications, rearrangements and cleavage as well as targeted degradation of pre-ribosomal RNA by the RNA exosome. In Papio anubis (Olive baboon), this protein is Small ribosomal subunit protein uS4 (RPS9).